The sequence spans 109 residues: Ribonuclease P protein component 2 (109 aa).

Belongs to the eukaryotic/archaeal RNase P protein component 2 family. Consists of a catalytic RNA component and at least 4-5 protein subunits.

The protein resides in the cytoplasm. It catalyses the reaction Endonucleolytic cleavage of RNA, removing 5'-extranucleotides from tRNA precursor.. Functionally, part of ribonuclease P, a protein complex that generates mature tRNA molecules by cleaving their 5'-ends. In Archaeoglobus fulgidus (strain ATCC 49558 / DSM 4304 / JCM 9628 / NBRC 100126 / VC-16), this protein is Ribonuclease P protein component 2.